The chain runs to 497 residues: Glycine receptor subunit beta (497 aa).

The N-terminal stretch at 1–22 is a signal peptide; that stretch reads MKFLLTTAFLILISLWVEEAYS. Topologically, residues 23–268 are extracellular; the sequence is KEKSSKKGKG…IFTLRRQVGF (246 aa). N-linked (GlcNAc...) asparagine glycosylation occurs at Asn-54. Positions 108 and 174 each coordinate glycine. A disulfide bond links Cys-183 and Cys-197. A glycan (N-linked (GlcNAc...) asparagine) is linked at Asn-242. Cys-243 and Cys-255 are disulfide-bonded. A glycine-binding site is contributed by Thr-250. A helical membrane pass occupies residues 269–289; sequence YMMGVYAPTLLIVVLSWLSFW. Residues 290–294 are Cytoplasmic-facing; the sequence is INPDA. The helical transmembrane segment at 295 to 315 threads the bilayer; that stretch reads SAARVPLGIFSVLSLASECTT. Residues 316–327 lie on the Extracellular side of the membrane; it reads LAAELPKVSYVK. Residues 328–349 form a helical membrane-spanning segment; the sequence is ALDVWLIACLLFGFASLVEYAV. The Cytoplasmic segment spans residues 350–472; the sequence is VQVMLNNPKR…KPVIPTAAKR (123 aa). Thr-391 is subject to Phosphothreonine. Residues 473–496 form a helical membrane-spanning segment; the sequence is IDLYARALFPFCFLFFNVIYWSIY.

It belongs to the ligand-gated ion channel (TC 1.A.9) family. Glycine receptor (TC 1.A.9.3) subfamily. GLRB sub-subfamily. As to quaternary structure, forms heteropentamers with glycin receptor alpha subunits. Heteropentamers with GLRA1 can be composed of two GLRA1 and three GLRB subunits, or three GLRA1 and two GLRB subunits, or four GLRA1 subunits and one GLRB subunit. Forms heteropentamers with GLRA2. Functional GLRB-GLRA2 heteropentamers contain four GLRA2 subunits and one GLRB subunit, although alternative subunit composition cannot be excluded. Forms a heteropentamer with GLRA3. Interacts with GPHN.

It localises to the postsynaptic cell membrane. The protein localises to the synapse. It is found in the cell projection. Its subcellular location is the dendrite. The protein resides in the cell membrane. It localises to the cytoplasm. It catalyses the reaction chloride(in) = chloride(out). Its activity is regulated as follows. Channel opening is triggered by extracellular glycine. Heteropentameric channels composed of GLRB and GLRA1 are activated by lower glycine levels than homopentameric GLRA1. Functionally, subunit of heteromeric glycine-gated chloride channels. Plays an important role in the down-regulation of neuronal excitability. Contributes to the generation of inhibitory postsynaptic currents. The sequence is that of Glycine receptor subunit beta (GLRB) from Homo sapiens (Human).